Consider the following 339-residue polypeptide: Anthranilate phosphoribosyltransferase (339 aa).

5-phospho-alpha-D-ribose 1-diphosphate contacts are provided by residues Gly79, 82–83, Ser87, 89–92, 107–115, and Ser119; these read GD, NIST, and KHGNRSISS. Anthranilate is bound at residue Gly79. Mg(2+) is bound at residue Ser91. Asn110 contacts anthranilate. An anthranilate-binding site is contributed by Arg165. Asp224 and Glu225 together coordinate Mg(2+).

The protein belongs to the anthranilate phosphoribosyltransferase family. Homodimer. Mg(2+) is required as a cofactor.

It carries out the reaction N-(5-phospho-beta-D-ribosyl)anthranilate + diphosphate = 5-phospho-alpha-D-ribose 1-diphosphate + anthranilate. The protein operates within amino-acid biosynthesis; L-tryptophan biosynthesis; L-tryptophan from chorismate: step 2/5. Functionally, catalyzes the transfer of the phosphoribosyl group of 5-phosphorylribose-1-pyrophosphate (PRPP) to anthranilate to yield N-(5'-phosphoribosyl)-anthranilate (PRA). This chain is Anthranilate phosphoribosyltransferase, found in Listeria monocytogenes serovar 1/2a (strain ATCC BAA-679 / EGD-e).